A 330-amino-acid chain; its full sequence is Copper-containing nitrite reductase (330 aa).

Plastocyanin-like domains are found at residues 1-165 (GLPR…YDRV) and 166-330 (YTIG…PGPA). Histidine 85, histidine 90, histidine 125, cysteine 126, histidine 135, methionine 140, and histidine 296 together coordinate Cu cation.

Belongs to the multicopper oxidase family. Homotrimer. The cofactor is Cu(2+). Cu(+) is required as a cofactor. FAD serves as cofactor.

The protein localises to the periplasm. It carries out the reaction nitric oxide + Fe(III)-[cytochrome c] + H2O = Fe(II)-[cytochrome c] + nitrite + 2 H(+). It participates in nitrogen metabolism; nitrate reduction (denitrification); dinitrogen from nitrate: step 2/4. The sequence is that of Copper-containing nitrite reductase (nirK) from Alcaligenes xylosoxydans xylosoxydans (Achromobacter xylosoxidans).